We begin with the raw amino-acid sequence, 245 residues long: rRNA adenine N-6-methyltransferase (245 aa).

Positions 10, 12, 37, 58, 83, and 100 each coordinate S-adenosyl-L-methionine.

Belongs to the class I-like SAM-binding methyltransferase superfamily. rRNA adenine N(6)-methyltransferase family.

It catalyses the reaction adenosine(2085) in 23S rRNA + 2 S-adenosyl-L-methionine = N(6)-dimethyladenosine(2085) in 23S rRNA + 2 S-adenosyl-L-homocysteine + 2 H(+). In terms of biological role, this protein produces a dimethylation of the adenine residue at position 2085 in 23S rRNA, resulting in reduced affinity between ribosomes and macrolide-lincosamide-streptogramin B antibiotics. The polypeptide is rRNA adenine N-6-methyltransferase (Streptococcus sanguinis).